The chain runs to 158 residues: Phosphopantetheine adenylyltransferase (158 aa).

Residue threonine 9 participates in substrate binding. ATP-binding positions include 9–10 (TF) and histidine 17. The substrate site is built by lysine 41, leucine 73, and arginine 87. ATP is bound by residues 88-90 (GLR), glutamate 98, and 123-129 (YAYISSS).

It belongs to the bacterial CoaD family. In terms of assembly, homohexamer. Mg(2+) is required as a cofactor.

Its subcellular location is the cytoplasm. The enzyme catalyses (R)-4'-phosphopantetheine + ATP + H(+) = 3'-dephospho-CoA + diphosphate. It functions in the pathway cofactor biosynthesis; coenzyme A biosynthesis; CoA from (R)-pantothenate: step 4/5. In terms of biological role, reversibly transfers an adenylyl group from ATP to 4'-phosphopantetheine, yielding dephospho-CoA (dPCoA) and pyrophosphate. In Allochromatium vinosum (strain ATCC 17899 / DSM 180 / NBRC 103801 / NCIMB 10441 / D) (Chromatium vinosum), this protein is Phosphopantetheine adenylyltransferase.